We begin with the raw amino-acid sequence, 597 residues long: NADH-quinone oxidoreductase subunits H/I (597 aa).

Residues methionine 1–alanine 405 are NADH-quinone oxidoreductase subunit H. Helical transmembrane passes span phenylalanine 12–valine 32, proline 82–isoleucine 102, valine 124–glycine 144, methionine 170–valine 190, proline 195–glycine 215, alanine 260–proline 280, tryptophan 286–leucine 306, phenylalanine 318–alanine 338, and alanine 351–leucine 371. The segment at histidine 406–arginine 597 is NADH-quinone oxidoreductase subunit I. 2 4Fe-4S ferredoxin-type domains span residues leucine 455–alanine 485 and arginine 501–aspartate 530. [4Fe-4S] cluster-binding residues include cysteine 465, cysteine 468, cysteine 471, cysteine 475, cysteine 510, cysteine 513, cysteine 516, and cysteine 520.

It in the N-terminal section; belongs to the complex I subunit 1 family. This sequence in the C-terminal section; belongs to the complex I 23 kDa subunit family. As to quaternary structure, NDH-1 is composed of 13 different subunits. Subunits NuoA, H/I, J, K, L, M, N constitute the membrane sector of the complex. The cofactor is [4Fe-4S] cluster.

Its subcellular location is the cell membrane. The enzyme catalyses a quinone + NADH + 5 H(+)(in) = a quinol + NAD(+) + 4 H(+)(out). Its function is as follows. NDH-1 shuttles electrons from NADH, via FMN and iron-sulfur (Fe-S) centers, to quinones in the respiratory chain. The immediate electron acceptor for the enzyme in this species is believed to be ubiquinone. Couples the redox reaction to proton translocation (for every two electrons transferred, four hydrogen ions are translocated across the cytoplasmic membrane), and thus conserves the redox energy in a proton gradient. This subunit may bind ubiquinone. This chain is NADH-quinone oxidoreductase subunits H/I (nuoH/I), found in Nocardia farcinica (strain IFM 10152).